Consider the following 550-residue polypeptide: Methyl-accepting chemotaxis protein PcaY (550 aa).

Residues 1-19 lie on the Cytoplasmic side of the membrane; sequence MVPTRSTARMLANLKIRTG. Residues 20–40 traverse the membrane as a helical segment; sequence MFWVLSLFSLTLLFSTASAWW. At 41-198 the chain is on the periplasmic side; sequence AALGSDQQIT…ESDRRLARAQ (158 aa). The interval 44–196 is ligand-binding domain; it reads GSDQQITELD…MLESDRRLAR (153 aa). Residues Arg-71 and Asn-75 each contribute to the benzoate site. Salicylate contacts are provided by Arg-71, Asn-75, and Tyr-135. 71–78 provides a ligand contact to 3,4-dihydroxybenzoate; it reads RSSANVSS. L-quinate-binding positions include 71 to 78, Tyr-135, Gln-142, and Asn-158; that span reads RSSANVSS. Gln-169 serves as a coordination point for 3,4-dihydroxybenzoate. The helical transmembrane segment at 199 to 219 threads the bilayer; the sequence is LLSLCLLGVTVVLAVLCWAFI. The Cytoplasmic segment spans residues 220 to 550; sequence AQRVLHPLRE…MTALVGRFKV (331 aa). The HAMP domain maps to 221–273; sequence QRVLHPLREAGGHFRRIASGDLSVPVQGQGNNEIGQLFHELQRMQQSQRDTLG. The region spanning 278 to 514 is the Methyl-accepting transducer domain; that stretch reads CARQLDAAAT…EVDRNLLNIR (237 aa).

It belongs to the methyl-accepting chemotaxis (MCP) protein family. As to quaternary structure, ligand free PcaY_PP-ligand-binding domain (LBD) is present in a monomer-dimer equilibrium. Only the dimeric LBD is able to bind ligands which in turn causes dimer stabilization.

The protein resides in the cell inner membrane. Its function is as follows. Chemotactic-signal transducers respond to changes in the concentration of attractants and repellents in the environment, transduce a signal from the outside to the inside of the cell, and facilitate sensory adaptation through the variation of the level of methylation. PcaY recognizes a wide range of compounds containing a C6-membered ring with a carboxylate group. Binds preferentially compounds that serve as carbon sources and among them those that rapidly promote growth. Tightest binding compounds are quinate, shikimate, 3-dehydroshikimate and protocatechuate, which are at the interception of the biosynthetic shikimate and catabolic quinate pathways. This is Methyl-accepting chemotaxis protein PcaY from Pseudomonas putida (strain ATCC 47054 / DSM 6125 / CFBP 8728 / NCIMB 11950 / KT2440).